The chain runs to 195 residues: Pyridoxal 5'-phosphate synthase subunit PdxT (195 aa).

Glycine 46–serine 48 serves as a coordination point for L-glutamine. Cysteine 78 acts as the Nucleophile in catalysis. Residues arginine 107 and isoleucine 135–arginine 136 each bind L-glutamine. Catalysis depends on charge relay system residues histidine 172 and glutamate 174.

It belongs to the glutaminase PdxT/SNO family. In the presence of PdxS, forms a dodecamer of heterodimers. Only shows activity in the heterodimer.

It catalyses the reaction aldehydo-D-ribose 5-phosphate + D-glyceraldehyde 3-phosphate + L-glutamine = pyridoxal 5'-phosphate + L-glutamate + phosphate + 3 H2O + H(+). The enzyme catalyses L-glutamine + H2O = L-glutamate + NH4(+). Its pathway is cofactor biosynthesis; pyridoxal 5'-phosphate biosynthesis. Functionally, catalyzes the hydrolysis of glutamine to glutamate and ammonia as part of the biosynthesis of pyridoxal 5'-phosphate. The resulting ammonia molecule is channeled to the active site of PdxS. The chain is Pyridoxal 5'-phosphate synthase subunit PdxT from Corynebacterium jeikeium (strain K411).